Here is a 171-residue protein sequence, read N- to C-terminus: Protein-export protein SecB (171 aa).

Belongs to the SecB family. In terms of assembly, homotetramer, a dimer of dimers. One homotetramer interacts with 1 SecA dimer.

The protein resides in the cytoplasm. Its function is as follows. One of the proteins required for the normal export of preproteins out of the cell cytoplasm. It is a molecular chaperone that binds to a subset of precursor proteins, maintaining them in a translocation-competent state. It also specifically binds to its receptor SecA. This chain is Protein-export protein SecB, found in Gluconacetobacter diazotrophicus (strain ATCC 49037 / DSM 5601 / CCUG 37298 / CIP 103539 / LMG 7603 / PAl5).